Here is a 158-residue protein sequence, read N- to C-terminus: SsrA-binding protein (158 aa).

Belongs to the SmpB family.

The protein resides in the cytoplasm. In terms of biological role, required for rescue of stalled ribosomes mediated by trans-translation. Binds to transfer-messenger RNA (tmRNA), required for stable association of tmRNA with ribosomes. tmRNA and SmpB together mimic tRNA shape, replacing the anticodon stem-loop with SmpB. tmRNA is encoded by the ssrA gene; the 2 termini fold to resemble tRNA(Ala) and it encodes a 'tag peptide', a short internal open reading frame. During trans-translation Ala-aminoacylated tmRNA acts like a tRNA, entering the A-site of stalled ribosomes, displacing the stalled mRNA. The ribosome then switches to translate the ORF on the tmRNA; the nascent peptide is terminated with the 'tag peptide' encoded by the tmRNA and targeted for degradation. The ribosome is freed to recommence translation, which seems to be the essential function of trans-translation. This Symbiobacterium thermophilum (strain DSM 24528 / JCM 14929 / IAM 14863 / T) protein is SsrA-binding protein.